The chain runs to 217 residues: GTPase IMAP family member GIMD1 (217 aa).

The AIG1-type G domain occupies 6-217 (KMIINLALFG…ENCYQVLTFK (212 aa)). GTP contacts are provided by residues 15-23 (GMTQSGKSS), Ser36, and 148-150 (HAE).

This sequence belongs to the TRAFAC class TrmE-Era-EngA-EngB-Septin-like GTPase superfamily. AIG1/Toc34/Toc159-like paraseptin GTPase family. IAN subfamily.

This is GTPase IMAP family member GIMD1 (GIMD1) from Homo sapiens (Human).